We begin with the raw amino-acid sequence, 1150 residues long: PAN2-PAN3 deadenylation complex catalytic subunit PAN2 (1150 aa).

WD repeat units lie at residues 26–67, 114–156, 158–194, and 290–328; these read AHHS…MEFQ, GHVN…ITKE, PAPN…VINT, and GHTH…VSFV. The linker stretch occupies residues 326-471; the sequence is SFVDQGLPVE…IRTDIESLKS (146 aa). Residues 472-862 form the USP domain; that stretch reads VVPNMYHLFE…TPLVVMFQLK (391 aa). The Exonuclease domain occupies 911 to 1079; the sequence is AIDAEFVLAK…HDSIEDANTA (169 aa). A divalent metal cation is bound by residues aspartate 913, glutamate 915, aspartate 1022, and aspartate 1075. Residues 1118-1150 are disordered; that stretch reads GQSAQRTETPPMVDDAQPGALLPYQPPELLQGS.

It belongs to the peptidase C19 family. PAN2 subfamily. As to quaternary structure, forms a heterotrimer with an asymmetric homodimer of the regulatory subunit PAN3 to form the poly(A)-nuclease (PAN) deadenylation complex. A divalent metal cation serves as cofactor.

It is found in the cytoplasm. The catalysed reaction is Exonucleolytic cleavage of poly(A) to 5'-AMP.. Its activity is regulated as follows. Positively regulated by the regulatory subunit PAN3. Functionally, catalytic subunit of the poly(A)-nuclease (PAN) deadenylation complex, one of two cytoplasmic mRNA deadenylases involved in mRNA turnover. PAN specifically shortens poly(A) tails of RNA and the activity is stimulated by poly(A)-binding protein PAB1. PAN deadenylation is followed by rapid degradation of the shortened mRNA tails by the CCR4-NOT complex. Deadenylated mRNAs are then degraded by two alternative mechanisms, namely exosome-mediated 3'-5' exonucleolytic degradation, or deadenylation-dependent mRNA decaping and subsequent 5'-3' exonucleolytic degradation by XRN1. May also be involved in post-transcriptional maturation of mRNA poly(A) tails. The protein is PAN2-PAN3 deadenylation complex catalytic subunit PAN2 of Pyricularia oryzae (strain 70-15 / ATCC MYA-4617 / FGSC 8958) (Rice blast fungus).